A 156-amino-acid polypeptide reads, in one-letter code: Transcriptional repressor NrdR (156 aa).

The segment at 3 to 34 is a zinc-finger region; it reads CPYCGHLEDRVVDSRETQDGQATRRRRACLSC. Residues 49-139 enclose the ATP-cone domain; sequence PQVVKKDGRR…VYRAFRDVGE (91 aa).

It belongs to the NrdR family. Zn(2+) is required as a cofactor.

Negatively regulates transcription of bacterial ribonucleotide reductase nrd genes and operons by binding to NrdR-boxes. The sequence is that of Transcriptional repressor NrdR from Anaeromyxobacter dehalogenans (strain 2CP-C).